The following is a 57-amino-acid chain: Three-finger toxin Tschuditoxin-I (57 aa).

3 cysteine pairs are disulfide-bonded: Cys3–Cys22, Cys17–Cys39, and Cys41–Cys52.

As to expression, expressed by the venom gland.

It localises to the secreted. In terms of biological role, produces peripheral paralysis by blocking neuromuscular transmission at the postsynaptic site. Binds to and inhibits the endogenous nicotinic acetylcholine receptors (nAChR). This neurotoxin is lethal to mice by intraperitoneal or intravenous injection. The protein is Three-finger toxin Tschuditoxin-I of Micrurus tschudii (Desert coral snake).